The following is a 457-amino-acid chain: Siroheme synthase (457 aa).

The segment at 1-204 (MDHLPIFCQL…NDQKAITETT (204 aa)) is precorrin-2 dehydrogenase /sirohydrochlorin ferrochelatase. NAD(+) contacts are provided by residues 22 to 23 (DV) and 43 to 44 (LA). S128 is modified (phosphoserine). The uroporphyrinogen-III C-methyltransferase stretch occupies residues 216 to 457 (GEVVLVGAGP…RDKLNWFSNH (242 aa)). S-adenosyl-L-methionine is bound at residue P225. The Proton acceptor role is filled by D248. The active-site Proton donor is K270. Residues 301–303 (GGD), I306, 331–332 (TA), M382, and G411 each bind S-adenosyl-L-methionine.

It in the N-terminal section; belongs to the precorrin-2 dehydrogenase / sirohydrochlorin ferrochelatase family. The protein in the C-terminal section; belongs to the precorrin methyltransferase family.

The enzyme catalyses uroporphyrinogen III + 2 S-adenosyl-L-methionine = precorrin-2 + 2 S-adenosyl-L-homocysteine + H(+). The catalysed reaction is precorrin-2 + NAD(+) = sirohydrochlorin + NADH + 2 H(+). It carries out the reaction siroheme + 2 H(+) = sirohydrochlorin + Fe(2+). Its pathway is cofactor biosynthesis; adenosylcobalamin biosynthesis; precorrin-2 from uroporphyrinogen III: step 1/1. The protein operates within cofactor biosynthesis; adenosylcobalamin biosynthesis; sirohydrochlorin from precorrin-2: step 1/1. It functions in the pathway porphyrin-containing compound metabolism; siroheme biosynthesis; precorrin-2 from uroporphyrinogen III: step 1/1. It participates in porphyrin-containing compound metabolism; siroheme biosynthesis; siroheme from sirohydrochlorin: step 1/1. Its pathway is porphyrin-containing compound metabolism; siroheme biosynthesis; sirohydrochlorin from precorrin-2: step 1/1. In terms of biological role, multifunctional enzyme that catalyzes the SAM-dependent methylations of uroporphyrinogen III at position C-2 and C-7 to form precorrin-2 via precorrin-1. Then it catalyzes the NAD-dependent ring dehydrogenation of precorrin-2 to yield sirohydrochlorin. Finally, it catalyzes the ferrochelation of sirohydrochlorin to yield siroheme. This is Siroheme synthase from Escherichia coli O8 (strain IAI1).